The following is a 421-amino-acid chain: Serine hydroxymethyltransferase (421 aa).

Residues leucine 121 and 125-127 (GHL) each bind (6S)-5,6,7,8-tetrahydrofolate. Lysine 229 bears the N6-(pyridoxal phosphate)lysine mark.

It belongs to the SHMT family. In terms of assembly, homodimer. Pyridoxal 5'-phosphate serves as cofactor.

It localises to the cytoplasm. It catalyses the reaction (6R)-5,10-methylene-5,6,7,8-tetrahydrofolate + glycine + H2O = (6S)-5,6,7,8-tetrahydrofolate + L-serine. The protein operates within one-carbon metabolism; tetrahydrofolate interconversion. Its pathway is amino-acid biosynthesis; glycine biosynthesis; glycine from L-serine: step 1/1. In terms of biological role, catalyzes the reversible interconversion of serine and glycine with tetrahydrofolate (THF) serving as the one-carbon carrier. This reaction serves as the major source of one-carbon groups required for the biosynthesis of purines, thymidylate, methionine, and other important biomolecules. Also exhibits THF-independent aldolase activity toward beta-hydroxyamino acids, producing glycine and aldehydes, via a retro-aldol mechanism. The sequence is that of Serine hydroxymethyltransferase from Actinobacillus pleuropneumoniae serotype 7 (strain AP76).